The primary structure comprises 303 residues: 34 kDa antigenic protein homolog (303 aa).

4 consecutive transmembrane segments (helical) span residues 42-62 (IAVA…MFTL), 77-97 (TGLP…ALVP), 102-122 (HVTV…SATF), and 134-154 (LWVV…ALLV). Composition is skewed to low complexity over residues 194 to 207 (QGAQ…SPGP) and 215 to 255 (GYGS…HQGP). Positions 194 to 303 (QGAQQAAGLQ…QSSSPGGAPV (110 aa)) are disordered. Pro residues predominate over residues 256–271 (STPPTGFPSFSPPPPV). Residues 274–286 (GTGSQAGSAPVNY) show a composition bias toward polar residues. Low complexity predominate over residues 287–303 (SNPSGGEQSSSPGGAPV).

To M.paratuberculosis 34 kDa antigenic protein.

Its subcellular location is the cell membrane. This Mycobacterium bovis (strain ATCC BAA-935 / AF2122/97) protein is 34 kDa antigenic protein homolog.